The chain runs to 968 residues: RNA polymerase-associated protein RapA (968 aa).

In terms of domain architecture, Helicase ATP-binding spans 163 to 332 (EVGRRYAPRV…FARLRLLDPD (170 aa)). Residue 176 to 183 (DEVGLGKT) participates in ATP binding. The DEAH box signature appears at 278–281 (DEAH). Residues 491–655 (RVDWLIEFLK…EFAEDLLNVL (165 aa)) enclose the Helicase C-terminal domain.

Belongs to the SNF2/RAD54 helicase family. RapA subfamily. Interacts with the RNAP. Has a higher affinity for the core RNAP than for the holoenzyme. Its ATPase activity is stimulated by binding to RNAP.

Functionally, transcription regulator that activates transcription by stimulating RNA polymerase (RNAP) recycling in case of stress conditions such as supercoiled DNA or high salt concentrations. Probably acts by releasing the RNAP, when it is trapped or immobilized on tightly supercoiled DNA. Does not activate transcription on linear DNA. Probably not involved in DNA repair. The sequence is that of RNA polymerase-associated protein RapA from Shewanella baltica (strain OS155 / ATCC BAA-1091).